A 217-amino-acid chain; its full sequence is Ribosomal RNA small subunit methyltransferase G (217 aa).

Residues G79, L84, 130-131 (IE), and R148 each bind S-adenosyl-L-methionine.

Belongs to the methyltransferase superfamily. RNA methyltransferase RsmG family.

The protein resides in the cytoplasm. It catalyses the reaction guanosine(527) in 16S rRNA + S-adenosyl-L-methionine = N(7)-methylguanosine(527) in 16S rRNA + S-adenosyl-L-homocysteine. Its function is as follows. Specifically methylates the N7 position of guanine in position 527 of 16S rRNA. The protein is Ribosomal RNA small subunit methyltransferase G of Desulfotalea psychrophila (strain LSv54 / DSM 12343).